A 638-amino-acid polypeptide reads, in one-letter code: uncharacterized protein (638 aa).

Residues 1–31 (MKFIKFNDSTIDSFLFMMLTDLAKTLTKSEA) form the signal peptide. Basic and acidic residues-rich tracts occupy residues 247-256 (EEKKAPKLSD), 273-284 (EEMPTWHRETEA), 301-310 (DLGKDASREG), and 329-342 (RKDY…ESQK). Disordered regions lie at residues 247 to 285 (EEKK…TEAP) and 301 to 354 (DLGK…ADGK). The VWFA domain maps to 445–632 (FTLLVDCSAS…DVLYPLLKKL (188 aa)).

This is an uncharacterized protein from Bacillus subtilis (strain 168).